We begin with the raw amino-acid sequence, 362 residues long: Chorismate synthase (362 aa).

Residue arginine 47 participates in NADP(+) binding. FMN contacts are provided by residues arginine 124 to serine 126, glycine 286, lysine 301 to threonine 305, and arginine 327.

The protein belongs to the chorismate synthase family. In terms of assembly, homotetramer. FMNH2 serves as cofactor.

The catalysed reaction is 5-O-(1-carboxyvinyl)-3-phosphoshikimate = chorismate + phosphate. The protein operates within metabolic intermediate biosynthesis; chorismate biosynthesis; chorismate from D-erythrose 4-phosphate and phosphoenolpyruvate: step 7/7. In terms of biological role, catalyzes the anti-1,4-elimination of the C-3 phosphate and the C-6 proR hydrogen from 5-enolpyruvylshikimate-3-phosphate (EPSP) to yield chorismate, which is the branch point compound that serves as the starting substrate for the three terminal pathways of aromatic amino acid biosynthesis. This reaction introduces a second double bond into the aromatic ring system. This is Chorismate synthase from Prochlorococcus marinus (strain MIT 9303).